We begin with the raw amino-acid sequence, 375 residues long: RING-H2 finger protein ATL16 (375 aa).

A disordered region spans residues Met1–Pro20. Residues Val39 to Ile59 traverse the membrane as a helical segment. The RING-type; atypical zinc finger occupies Cys138–Arg180. Disordered regions lie at residues Gly223–Gly266 and Ser356–Pro375. Residues Gln238–Pro257 show a composition bias toward polar residues.

It belongs to the RING-type zinc finger family. ATL subfamily.

It is found in the membrane. It catalyses the reaction S-ubiquitinyl-[E2 ubiquitin-conjugating enzyme]-L-cysteine + [acceptor protein]-L-lysine = [E2 ubiquitin-conjugating enzyme]-L-cysteine + N(6)-ubiquitinyl-[acceptor protein]-L-lysine.. It functions in the pathway protein modification; protein ubiquitination. The sequence is that of RING-H2 finger protein ATL16 (ATL16) from Arabidopsis thaliana (Mouse-ear cress).